The primary structure comprises 403 residues: Putative queuine tRNA-ribosyltransferase (403 aa).

The active-site Proton acceptor is the aspartate 91. Residues 91 to 95, aspartate 177, glutamine 218, and glycine 245 each bind substrate; that span reads DSGGF. Residues 275–281 form an RNA binding region; the sequence is GIGAIED. Catalysis depends on aspartate 294, which acts as the Nucleophile. The interval 299-303 is RNA binding; important for wobble base 34 recognition; that stretch reads ARWAR. Positions 341, 343, 346, and 372 each coordinate Zn(2+).

Belongs to the queuine tRNA-ribosyltransferase family. Homodimer. Within each dimer, one monomer is responsible for RNA recognition and catalysis, while the other monomer binds to the replacement base PreQ1. Zn(2+) is required as a cofactor.

The catalysed reaction is 7-aminomethyl-7-carbaguanine + guanosine(34) in tRNA = 7-aminomethyl-7-carbaguanosine(34) in tRNA + guanine. Functionally, catalyzes the base-exchange of a guanine (G) residue with the queuine precursor 7-aminomethyl-7-deazaguanine (PreQ1) at position 34 (anticodon wobble position) in tRNAs with GU(N) anticodons (tRNA-Asp, -Asn, -His and -Tyr). Catalysis occurs through a double-displacement mechanism. The nucleophile active site attacks the C1' of nucleotide 34 to detach the guanine base from the RNA, forming a covalent enzyme-RNA intermediate. The proton acceptor active site deprotonates the incoming PreQ1, allowing a nucleophilic attack on the C1' of the ribose to form the product. After dissociation, two additional enzymatic reactions on the tRNA convert PreQ1 to queuine (Q), resulting in the hypermodified nucleoside queuosine (7-(((4,5-cis-dihydroxy-2-cyclopenten-1-yl)amino)methyl)-7-deazaguanosine). The protein is Putative queuine tRNA-ribosyltransferase of Archaeoglobus fulgidus (strain ATCC 49558 / DSM 4304 / JCM 9628 / NBRC 100126 / VC-16).